A 405-amino-acid polypeptide reads, in one-letter code: Corticosteroid-binding globulin (405 aa).

Residues 1–22 (MPLLLYTCLLWLSTSGLWTVQA) form the signal peptide. N-linked (GlcNAc...) asparagine glycosylation is found at N26, N31, N96, and N260. Residue N286 coordinates cortisol. 2 N-linked (GlcNAc...) asparagine glycosylation sites follow: N330 and N369. W393 serves as a coordination point for cortisol.

It belongs to the serpin family. Expressed by the liver; secreted in plasma.

Its subcellular location is the secreted. Functionally, major transport protein for glucocorticoids and progestins in the blood of almost all vertebrate species. This Pongo abelii (Sumatran orangutan) protein is Corticosteroid-binding globulin (SERPINA6).